The following is a 169-amino-acid chain: Protein GrpE (169 aa).

A disordered region spans residues 1–25 (MSEEKQNGQIQEETVENSENQNNEL). The span at 7-23 (NGQIQEETVENSENQNN) shows a compositional bias: polar residues.

The protein belongs to the GrpE family. As to quaternary structure, homodimer.

The protein localises to the cytoplasm. Its function is as follows. Participates actively in the response to hyperosmotic and heat shock by preventing the aggregation of stress-denatured proteins, in association with DnaK and GrpE. It is the nucleotide exchange factor for DnaK and may function as a thermosensor. Unfolded proteins bind initially to DnaJ; upon interaction with the DnaJ-bound protein, DnaK hydrolyzes its bound ATP, resulting in the formation of a stable complex. GrpE releases ADP from DnaK; ATP binding to DnaK triggers the release of the substrate protein, thus completing the reaction cycle. Several rounds of ATP-dependent interactions between DnaJ, DnaK and GrpE are required for fully efficient folding. The sequence is that of Protein GrpE from Campylobacter lari (strain RM2100 / D67 / ATCC BAA-1060).